The chain runs to 625 residues: Glutamine--fructose-6-phosphate aminotransferase [isomerizing] (625 aa).

C2 serves as the catalytic Nucleophile; for GATase activity. In terms of domain architecture, Glutamine amidotransferase type-2 spans 2–229; it reads CGLVGYVGQR…QDQAVVITAD (228 aa). SIS domains lie at 298 to 437 and 470 to 615; these read SDQE…ARGT and LAYR…VDKP. The active-site For Fru-6P isomerization activity is the K620.

As to quaternary structure, homodimer.

The protein localises to the cytoplasm. It carries out the reaction D-fructose 6-phosphate + L-glutamine = D-glucosamine 6-phosphate + L-glutamate. Functionally, catalyzes the first step in hexosamine metabolism, converting fructose-6P into glucosamine-6P using glutamine as a nitrogen source. This Mycobacterium leprae (strain TN) protein is Glutamine--fructose-6-phosphate aminotransferase [isomerizing].